The following is a 258-amino-acid chain: Hydroxyacylglutathione hydrolase (258 aa).

Residues His-52, His-54, Asp-56, His-57, His-109, Asp-126, and His-164 each contribute to the Zn(2+) site.

Belongs to the metallo-beta-lactamase superfamily. Glyoxalase II family. As to quaternary structure, monomer. Requires Zn(2+) as cofactor.

It catalyses the reaction an S-(2-hydroxyacyl)glutathione + H2O = a 2-hydroxy carboxylate + glutathione + H(+). It functions in the pathway secondary metabolite metabolism; methylglyoxal degradation; (R)-lactate from methylglyoxal: step 2/2. In terms of biological role, thiolesterase that catalyzes the hydrolysis of S-D-lactoyl-glutathione to form glutathione and D-lactic acid. The sequence is that of Hydroxyacylglutathione hydrolase from Xylella fastidiosa (strain 9a5c).